The chain runs to 227 residues: Homeobox-leucine zipper protein ATHB-54 (227 aa).

A DNA-binding region (homeobox) is located at residues 65–124 (EITKKRKLTPIQLRLLEESFEEEKRLEPDRKLWLAEKLGLQPSQVAVWFQNRRARYKTKQ). Residues 125–153 (LEHDCDSLKASYAKLKTDWDILFVQNQTL) form a leucine-zipper region. Residues 175–198 (IERKRLGEEGSSVKSDNTQYSEEE) form a disordered region.

The protein belongs to the HD-ZIP homeobox family. Class I subfamily. In terms of tissue distribution, predominantly expressed in flowers and siliques.

Its subcellular location is the nucleus. Functionally, probable transcription factor. This Arabidopsis thaliana (Mouse-ear cress) protein is Homeobox-leucine zipper protein ATHB-54 (ATHB-54).